A 257-amino-acid chain; its full sequence is Imidazole glycerol phosphate synthase subunit HisF (257 aa).

Catalysis depends on residues D12 and D131.

The protein belongs to the HisA/HisF family. In terms of assembly, heterodimer of HisH and HisF.

Its subcellular location is the cytoplasm. The catalysed reaction is 5-[(5-phospho-1-deoxy-D-ribulos-1-ylimino)methylamino]-1-(5-phospho-beta-D-ribosyl)imidazole-4-carboxamide + L-glutamine = D-erythro-1-(imidazol-4-yl)glycerol 3-phosphate + 5-amino-1-(5-phospho-beta-D-ribosyl)imidazole-4-carboxamide + L-glutamate + H(+). Its pathway is amino-acid biosynthesis; L-histidine biosynthesis; L-histidine from 5-phospho-alpha-D-ribose 1-diphosphate: step 5/9. IGPS catalyzes the conversion of PRFAR and glutamine to IGP, AICAR and glutamate. The HisF subunit catalyzes the cyclization activity that produces IGP and AICAR from PRFAR using the ammonia provided by the HisH subunit. The protein is Imidazole glycerol phosphate synthase subunit HisF of Burkholderia orbicola (strain MC0-3).